A 774-amino-acid chain; its full sequence is Ent-beyerene synthase KSL4, chloroplastic (774 aa).

The N-terminal 35 residues, 1–35, are a transit peptide targeting the chloroplast; that stretch reads MLLGSTNTLRISSHGKEWEGKTLTGMPLGKVNQRV. Mg(2+) is bound by residues Asp-525, Asp-529, Asn-668, Asp-669, Thr-672, and Glu-676. A DDXXD motif motif is present at residues 525-529; the sequence is DDFFD.

It belongs to the terpene synthase family. The cofactor is Mg(2+).

The protein resides in the plastid. It localises to the chloroplast. The enzyme catalyses ent-copalyl diphosphate = ent-beyerene + diphosphate. It catalyses the reaction ent-copalyl diphosphate = ent-atiserene + diphosphate. The catalysed reaction is ent-copalyl diphosphate = ent-kaur-16-ene + diphosphate. It participates in secondary metabolite biosynthesis; terpenoid biosynthesis. In terms of biological role, diterpene cyclase involved in the biosynthesis of labdane-related diterpenoids (LRDs) natural products. Catalyzes the cyclization of ent-CDP into ent-beyerene as a major and ent-kaurene and ent-atiserene as minor products. The protein is Ent-beyerene synthase KSL4, chloroplastic of Ricinus communis (Castor bean).